A 156-amino-acid polypeptide reads, in one-letter code: MRAGVRIGIDPGDARIGVARSDPSGFLATPVETVRRGKGDLARIGRILAAEEDEGATVLEVVVGLPRSLSGREGPAAAKVREFAGRLAARVAPVPVRLVDERMTTVSAEAMLRDQGRTGGKRRAVVDQAAAVLILQHALDTERATGAAPGEIVEET.

This sequence belongs to the YqgF nuclease family.

It is found in the cytoplasm. Could be a nuclease involved in processing of the 5'-end of pre-16S rRNA. The chain is Putative pre-16S rRNA nuclease from Nocardioides sp. (strain ATCC BAA-499 / JS614).